The following is a 220-amino-acid chain: Putative respiratory nitrate reductase subunit Rieske (220 aa).

The Rieske domain maps to 118–206 (KAPTLLVRHA…ITVSSEGYLI (89 aa)). Residues Cys-151, His-153, Cys-168, and His-171 each contribute to the [2Fe-2S] cluster site. Cys-156 and Cys-170 are oxidised to a cystine.

Probable multiprotein complex; a catalytic heterodimer of an alpha and beta chain is proposed to associate with additional subunits involved in membrane attachment and electron transfer. [2Fe-2S] cluster serves as cofactor.

Its subcellular location is the cell membrane. In terms of biological role, the respiratory membrane-bound nitrate reductase enzyme complex plays a role in generation of metabolic energy by using nitrate as a terminal electron acceptor during anaerobic conditions. Proposed Rieske subunit involved in a protonmotive Q-cycle mechanism-based electron transfer electrons to the beta subunit. The chain is Putative respiratory nitrate reductase subunit Rieske (narB) from Haloferax mediterranei (strain ATCC 33500 / DSM 1411 / JCM 8866 / NBRC 14739 / NCIMB 2177 / R-4) (Halobacterium mediterranei).